Reading from the N-terminus, the 65-residue chain is Large ribosomal subunit protein bL33m (65 aa).

A mitochondrion-targeting transit peptide spans 1–8; that stretch reads MFLTTANL.

The protein belongs to the bacterial ribosomal protein bL33 family. Component of the mitochondrial ribosome large subunit (39S) which comprises a 16S rRNA and about 50 distinct proteins.

Its subcellular location is the mitochondrion. In Tetraodon nigroviridis (Spotted green pufferfish), this protein is Large ribosomal subunit protein bL33m (mrpl33).